A 214-amino-acid chain; its full sequence is Phosphatidylserine decarboxylase proenzyme (214 aa).

Ser-182 serves as the catalytic Schiff-base intermediate with substrate; via pyruvic acid. Ser-182 carries the pyruvic acid (Ser); by autocatalysis modification.

This sequence belongs to the phosphatidylserine decarboxylase family. PSD-A subfamily. In terms of assembly, heterodimer of a large membrane-associated beta subunit and a small pyruvoyl-containing alpha subunit. Pyruvate serves as cofactor. Is synthesized initially as an inactive proenzyme. Formation of the active enzyme involves a self-maturation process in which the active site pyruvoyl group is generated from an internal serine residue via an autocatalytic post-translational modification. Two non-identical subunits are generated from the proenzyme in this reaction, and the pyruvate is formed at the N-terminus of the alpha chain, which is derived from the carboxyl end of the proenzyme. The post-translation cleavage follows an unusual pathway, termed non-hydrolytic serinolysis, in which the side chain hydroxyl group of the serine supplies its oxygen atom to form the C-terminus of the beta chain, while the remainder of the serine residue undergoes an oxidative deamination to produce ammonia and the pyruvoyl prosthetic group on the alpha chain.

The protein localises to the cell membrane. The enzyme catalyses a 1,2-diacyl-sn-glycero-3-phospho-L-serine + H(+) = a 1,2-diacyl-sn-glycero-3-phosphoethanolamine + CO2. Its pathway is phospholipid metabolism; phosphatidylethanolamine biosynthesis; phosphatidylethanolamine from CDP-diacylglycerol: step 2/2. Catalyzes the formation of phosphatidylethanolamine (PtdEtn) from phosphatidylserine (PtdSer). The polypeptide is Phosphatidylserine decarboxylase proenzyme (Solidesulfovibrio magneticus (strain ATCC 700980 / DSM 13731 / RS-1) (Desulfovibrio magneticus)).